The chain runs to 365 residues: MKLLIAGGGTGGHLFPGIAVAEEFLARNHSNEVLFVGTERGIEARLLPRLGYRLECITASGIKGQSPLAKIRSAAQLLYGYAQSRRILKEFRPDLVLGVGGYASAPVVLAARGMQIRRFIHEQNAIPGLTNKLLARFAEKVFISIEESRKFFPEDATILTGNPLRKEILWNVPLGQKTPASDEKLKLLVFGGSAGAHRINTAMIESLPFLAGVKERLIITHQTGEKDQAEVRKTYEQSGFAAEVTPFIDDMAAAYSNADMIVCRAGATTIAEVTACGKACIFIPYPYAADDHQRRNAEALLKKEAGYMILERELSGESLAFQVMELIAHPGKIEQTGRNARSLAQLDAAQVIVDEMTREQACTEK.

UDP-N-acetyl-alpha-D-glucosamine is bound by residues T10–G12, N124, R165, S193, I248, and Q293.

Belongs to the glycosyltransferase 28 family. MurG subfamily.

It localises to the cell inner membrane. The catalysed reaction is di-trans,octa-cis-undecaprenyl diphospho-N-acetyl-alpha-D-muramoyl-L-alanyl-D-glutamyl-meso-2,6-diaminopimeloyl-D-alanyl-D-alanine + UDP-N-acetyl-alpha-D-glucosamine = di-trans,octa-cis-undecaprenyl diphospho-[N-acetyl-alpha-D-glucosaminyl-(1-&gt;4)]-N-acetyl-alpha-D-muramoyl-L-alanyl-D-glutamyl-meso-2,6-diaminopimeloyl-D-alanyl-D-alanine + UDP + H(+). The protein operates within cell wall biogenesis; peptidoglycan biosynthesis. Its function is as follows. Cell wall formation. Catalyzes the transfer of a GlcNAc subunit on undecaprenyl-pyrophosphoryl-MurNAc-pentapeptide (lipid intermediate I) to form undecaprenyl-pyrophosphoryl-MurNAc-(pentapeptide)GlcNAc (lipid intermediate II). This Geotalea uraniireducens (strain Rf4) (Geobacter uraniireducens) protein is UDP-N-acetylglucosamine--N-acetylmuramyl-(pentapeptide) pyrophosphoryl-undecaprenol N-acetylglucosamine transferase.